The chain runs to 379 residues: Quinolinate synthase (379 aa).

Iminosuccinate contacts are provided by histidine 60 and serine 81. A [4Fe-4S] cluster-binding site is contributed by cysteine 126. Iminosuccinate is bound by residues 152–154 (YAN) and serine 169. Cysteine 213 lines the [4Fe-4S] cluster pocket. Residues 239-241 (HPE) and threonine 256 each bind iminosuccinate. Cysteine 310 lines the [4Fe-4S] cluster pocket.

It belongs to the quinolinate synthase family. Type 1 subfamily. [4Fe-4S] cluster is required as a cofactor.

It is found in the cytoplasm. The catalysed reaction is iminosuccinate + dihydroxyacetone phosphate = quinolinate + phosphate + 2 H2O + H(+). It functions in the pathway cofactor biosynthesis; NAD(+) biosynthesis; quinolinate from iminoaspartate: step 1/1. Its function is as follows. Catalyzes the condensation of iminoaspartate with dihydroxyacetone phosphate to form quinolinate. In Herminiimonas arsenicoxydans, this protein is Quinolinate synthase.